We begin with the raw amino-acid sequence, 147 residues long: Large ribosomal subunit protein uL13 (147 aa).

Belongs to the universal ribosomal protein uL13 family. In terms of assembly, part of the 50S ribosomal subunit.

In terms of biological role, this protein is one of the early assembly proteins of the 50S ribosomal subunit, although it is not seen to bind rRNA by itself. It is important during the early stages of 50S assembly. The protein is Large ribosomal subunit protein uL13 of Renibacterium salmoninarum (strain ATCC 33209 / DSM 20767 / JCM 11484 / NBRC 15589 / NCIMB 2235).